A 71-amino-acid chain; its full sequence is UPF0435 protein BLi00816/BL03111 (71 aa).

It belongs to the UPF0435 family.

In Bacillus licheniformis (strain ATCC 14580 / DSM 13 / JCM 2505 / CCUG 7422 / NBRC 12200 / NCIMB 9375 / NCTC 10341 / NRRL NRS-1264 / Gibson 46), this protein is UPF0435 protein BLi00816/BL03111.